The following is a 358-amino-acid chain: Fructose-bisphosphate aldolase 6, cytosolic (358 aa).

Serine 2 is modified (N-acetylserine). Position 39 (arginine 39) interacts with substrate. Cysteine 68 is subject to S-glutathionyl cysteine; transient. Cysteine 173 carries the post-translational modification S-glutathionyl cysteine; transient; alternate. S-nitrosocysteine; transient; alternate is present on cysteine 173. Glutamate 183 serves as the catalytic Proton acceptor. Residue lysine 225 is the Schiff-base intermediate with dihydroxyacetone-P of the active site. Residues 266 to 268 and arginine 298 contribute to the substrate site; that span reads SGG. At serine 350 the chain carries Phosphoserine. The residue at position 354 (lysine 354) is an N6,N6,N6-trimethyllysine.

Belongs to the class I fructose-bisphosphate aldolase family. As to quaternary structure, homotetramer. Interacts with TRX1 and TRX3. Interacts with GAPC1 and VDAC3. Post-translationally, S-glutathionylated at Cys-68 and Cys-173. S-nitrosylated at Cys-173. Expressed in roots, rosettes leaves, cauline leaves, stems and flowers.

The protein resides in the cytoplasm. Its subcellular location is the cytosol. The protein localises to the nucleus. It is found in the mitochondrion. It catalyses the reaction beta-D-fructose 1,6-bisphosphate = D-glyceraldehyde 3-phosphate + dihydroxyacetone phosphate. It functions in the pathway carbohydrate degradation; glycolysis; D-glyceraldehyde 3-phosphate and glycerone phosphate from D-glucose: step 4/4. Total and irreversible inhibition by S-nitrosoglutathione (GSNO). Partial and reversible inhibition by oxidized glutathione (GSSG). Fructose-bisphosphate aldolase that plays a key role in glycolysis and gluconeogenesis. Associates with GAPC1 to the outer mitochondrial membrane, in a redox-dependent manner, leading to binding and bundling of actin. Actin binding and bundling occurs under oxidizing conditions and is reversible under reducing conditions. May be part of a redox-dependent retrograde signal transduction network for adaptation upon oxidative stress. The protein is Fructose-bisphosphate aldolase 6, cytosolic of Arabidopsis thaliana (Mouse-ear cress).